A 284-amino-acid chain; its full sequence is Capsid assembly scaffolding protein (284 aa).

Catalysis depends on residues Asp19, His48, and Ser107. Residues Glu206–Arg243 adopt a coiled-coil conformation. The tract at residues Leu258 to Cys284 is disordered.

This sequence belongs to the P2likevirus scaffolding protein family. In terms of assembly, homomultimer. Post-translationally, autocleaves itself into an N-terminal fragment containing the protease activity, that remains in the capsid following maturation.

Functionally, scaffolding protein and protease involved in the icosahedric procapsid assembly. Coassembles with the capsid proteins to form the procapsid, in which the scaffolding protein is found within the external shell of icosahedrally arranged capsid protein subunits. In a subsequent step the scaffolding protein molecules are cleaved by the viral protease activity. In Enterobacteriaceae (Bacteriophage P2), this protein is Capsid assembly scaffolding protein (O).